A 615-amino-acid polypeptide reads, in one-letter code: MTIEEKLKLLPEKPGVYIMKDKSGKIIYVGKAVVLKNRVRQYFQNKEKQLPKVKVMLSHVEDFEYIVTDTELEALMLECNLIKKYKPKYNVLLKDDKNYPYIKVTVNEEYPRIMFTRRIEPDGAKYFGPYSSAFAVRETIKLVRKMFPIRTCNKNIEKDMGKVRECLYYHIGLCSAPCTNKINKEDYIKLVDQAVLFLDGKRDWLIQKLKEDMKKAAEELRFEEAARIRDQIFAIERTSEKQKVVSVGEDEQDIISMARSADISCIQVFFVRDGKLSGREHYYMKNTEGMERGEIISSFIKQFYEGAPYIPKEIITDVELDESELLSEWLSQKRGNKVFITIPVRGKKKELVDMVYQNALEALKNDISIREEISKDQVVLELSNLVGLDYAKRIEAYDISNTRGQDNVGSMVVFVDGKPKKSQYRKFNIKYVEGQDDYESMREVIERRFLHAIEEKELIEKGELEEDKAKFAEMPDLIFVDGGIGHVNAVLQVLSGLGISIPVYGMVKDSKHRTRGLVSPQGEIDIPMTTKAFRLIAQIQEEAHRFAITFHKEKQSKRFKSELLNIPGIGKKRAKALYDAFKSIEEIKRASVEDLKKVEGMNEKAAQAVYEYFRK.

The 80-residue stretch at 12–91 folds into the GIY-YIG domain; it reads EKPGVYIMKD…IKKYKPKYNV (80 aa). Positions 203–238 constitute a UVR domain; that stretch reads DWLIQKLKEDMKKAAEELRFEEAARIRDQIFAIERT.

This sequence belongs to the UvrC family. In terms of assembly, interacts with UvrB in an incision complex.

Its subcellular location is the cytoplasm. The UvrABC repair system catalyzes the recognition and processing of DNA lesions. UvrC both incises the 5' and 3' sides of the lesion. The N-terminal half is responsible for the 3' incision and the C-terminal half is responsible for the 5' incision. The protein is UvrABC system protein C of Thermoanaerobacter sp. (strain X514).